Consider the following 142-residue polypeptide: FAD synthase (142 aa).

Residues 9 to 10, 14 to 17, and D92 contribute to the ATP site; these read TF and HPGH.

It belongs to the archaeal FAD synthase family. Homodimer. A divalent metal cation is required as a cofactor.

It catalyses the reaction FMN + ATP + H(+) = FAD + diphosphate. The protein operates within cofactor biosynthesis; FAD biosynthesis; FAD from FMN: step 1/1. In terms of biological role, catalyzes the transfer of the AMP portion of ATP to flavin mononucleotide (FMN) to produce flavin adenine dinucleotide (FAD) coenzyme. This is FAD synthase from Haloferax volcanii (strain ATCC 29605 / DSM 3757 / JCM 8879 / NBRC 14742 / NCIMB 2012 / VKM B-1768 / DS2) (Halobacterium volcanii).